Reading from the N-terminus, the 257-residue chain is Thiazole synthase (257 aa).

Catalysis depends on Lys96, which acts as the Schiff-base intermediate with DXP. 1-deoxy-D-xylulose 5-phosphate is bound by residues Gly157, 184–185 (AG), and 206–207 (NT).

The protein belongs to the ThiG family. As to quaternary structure, homotetramer. Forms heterodimers with either ThiH or ThiS.

It is found in the cytoplasm. The catalysed reaction is [ThiS sulfur-carrier protein]-C-terminal-Gly-aminoethanethioate + 2-iminoacetate + 1-deoxy-D-xylulose 5-phosphate = [ThiS sulfur-carrier protein]-C-terminal Gly-Gly + 2-[(2R,5Z)-2-carboxy-4-methylthiazol-5(2H)-ylidene]ethyl phosphate + 2 H2O + H(+). It participates in cofactor biosynthesis; thiamine diphosphate biosynthesis. Catalyzes the rearrangement of 1-deoxy-D-xylulose 5-phosphate (DXP) to produce the thiazole phosphate moiety of thiamine. Sulfur is provided by the thiocarboxylate moiety of the carrier protein ThiS. In vitro, sulfur can be provided by H(2)S. This Bartonella henselae (strain ATCC 49882 / DSM 28221 / CCUG 30454 / Houston 1) (Rochalimaea henselae) protein is Thiazole synthase.